Consider the following 215-residue polypeptide: Protein Thf1 (215 aa).

Residues glutamate 182–threonine 213 adopt a coiled-coil conformation.

It belongs to the THF1 family.

May be involved in photosynthetic membrane biogenesis. The chain is Protein Thf1 from Synechococcus sp. (strain CC9605).